Reading from the N-terminus, the 300-residue chain is Glutamyl-Q tRNA(Asp) synthetase (300 aa).

Residues 8 to 12 (RFAPS) and glutamate 44 each bind L-glutamate. Residues 11-21 (PSPTGALHAGS) carry the 'HIGH' region motif. Residues cysteine 100, cysteine 102, tyrosine 126, and cysteine 130 each contribute to the Zn(2+) site. Residues tyrosine 190 and arginine 208 each contribute to the L-glutamate site. The 'KMSKS' region signature appears at 246 to 250 (KLSKQ). Lysine 249 serves as a coordination point for ATP.

Belongs to the class-I aminoacyl-tRNA synthetase family. GluQ subfamily. Zn(2+) serves as cofactor.

In terms of biological role, catalyzes the tRNA-independent activation of glutamate in presence of ATP and the subsequent transfer of glutamate onto a tRNA(Asp). Glutamate is transferred on the 2-amino-5-(4,5-dihydroxy-2-cyclopenten-1-yl) moiety of the queuosine in the wobble position of the QUC anticodon. This is Glutamyl-Q tRNA(Asp) synthetase from Leptothrix cholodnii (strain ATCC 51168 / LMG 8142 / SP-6) (Leptothrix discophora (strain SP-6)).